Reading from the N-terminus, the 290-residue chain is Diaminopimelate epimerase (290 aa).

Positions 17, 49, and 69 each coordinate substrate. C78 acts as the Proton donor in catalysis. Substrate-binding positions include 79–80, N166, N199, and 217–218; these read GN and ER. C226 functions as the Proton acceptor in the catalytic mechanism. 227-228 contributes to the substrate binding site; the sequence is GS.

It belongs to the diaminopimelate epimerase family. In terms of assembly, homodimer.

The protein localises to the cytoplasm. It carries out the reaction (2S,6S)-2,6-diaminopimelate = meso-2,6-diaminopimelate. It participates in amino-acid biosynthesis; L-lysine biosynthesis via DAP pathway; DL-2,6-diaminopimelate from LL-2,6-diaminopimelate: step 1/1. Catalyzes the stereoinversion of LL-2,6-diaminopimelate (L,L-DAP) to meso-diaminopimelate (meso-DAP), a precursor of L-lysine and an essential component of the bacterial peptidoglycan. The chain is Diaminopimelate epimerase from Nitrobacter hamburgensis (strain DSM 10229 / NCIMB 13809 / X14).